The sequence spans 510 residues: NAD(P)H-quinone oxidoreductase subunit 2 B, chloroplastic (510 aa).

The next 13 membrane-spanning stretches (helical) occupy residues 24-44 (LLLF…GLIL), 57-77 (IPWL…ALLF), 99-119 (IFQF…VEYI), 124-144 (MAIT…MFLC), 149-169 (LITI…LSGY), 183-203 (YLLM…WLYG), 227-247 (PGIS…LSPA), 295-315 (WHLL…LIAI), 323-343 (MLAY…IVGD), 354-374 (YMLF…SFGL), 392-412 (AFLA…PPLA), 418-438 (LHLF…IGLL), and 482-502 (LSMI…NPII).

This sequence belongs to the complex I subunit 2 family. In terms of assembly, NDH is composed of at least 16 different subunits, 5 of which are encoded in the nucleus.

Its subcellular location is the plastid. It localises to the chloroplast thylakoid membrane. It catalyses the reaction a plastoquinone + NADH + (n+1) H(+)(in) = a plastoquinol + NAD(+) + n H(+)(out). It carries out the reaction a plastoquinone + NADPH + (n+1) H(+)(in) = a plastoquinol + NADP(+) + n H(+)(out). Functionally, NDH shuttles electrons from NAD(P)H:plastoquinone, via FMN and iron-sulfur (Fe-S) centers, to quinones in the photosynthetic chain and possibly in a chloroplast respiratory chain. The immediate electron acceptor for the enzyme in this species is believed to be plastoquinone. Couples the redox reaction to proton translocation, and thus conserves the redox energy in a proton gradient. The polypeptide is NAD(P)H-quinone oxidoreductase subunit 2 B, chloroplastic (Morus indica (Mulberry)).